A 307-amino-acid chain; its full sequence is 1D-myo-inositol 2-acetamido-2-deoxy-alpha-D-glucopyranoside deacetylase 1 (307 aa).

Histidine 21, aspartate 24, and histidine 157 together coordinate Zn(2+).

The protein belongs to the MshB deacetylase family. Requires Zn(2+) as cofactor.

It carries out the reaction 1D-myo-inositol 2-acetamido-2-deoxy-alpha-D-glucopyranoside + H2O = 1D-myo-inositol 2-amino-2-deoxy-alpha-D-glucopyranoside + acetate. Catalyzes the deacetylation of 1D-myo-inositol 2-acetamido-2-deoxy-alpha-D-glucopyranoside (GlcNAc-Ins) in the mycothiol biosynthesis pathway. The protein is 1D-myo-inositol 2-acetamido-2-deoxy-alpha-D-glucopyranoside deacetylase 1 of Frankia casuarinae (strain DSM 45818 / CECT 9043 / HFP020203 / CcI3).